A 47-amino-acid chain; its full sequence is Defensin Ec-AMP-D1 (47 aa).

Cystine bridges form between Cys3–Cys47, Cys14–Cys34, Cys20–Cys41, and Cys24–Cys43.

Functionally, has antifungal activity. Inhibits spore germination in F.graminearum (IC(50)=15 ug/ml), F.oxysporum (IC(50)=102 ug/ml), F.verticillioides (IC(50)=8.5 ug/ml) and D.maydis (IC(50)=12.5 ug/ml), but not in C.graminicola, B.cinerea and H.sativum at concentrations below 30 ug/ml. Inhibits hyphal development in P.infestans (IC(50)=25.5 ug/ml), but not release of zoospores. At concentrations above 100 ug/ml, induces morphological changes such as lysis of hyphae and sporangia in P.infestans. In Echinochloa crus-galli (Barnyard grass), this protein is Defensin Ec-AMP-D1.